A 562-amino-acid polypeptide reads, in one-letter code: MOB kinase activator-like 2 (562 aa).

A disordered region spans residues 30 to 50; sequence KSGSVQGTTATATATGPPSPP. The span at 31 to 45 shows a compositional bias: low complexity; sequence SGSVQGTTATATATG. Zn(2+) is bound by residues Cys170, Cys175, His250, and His255. 3 disordered regions span residues 304-378, 468-523, and 538-562; these read DDTS…TASA, NFSN…STTV, and GASAGGGGNAVSAATGGATSASSTA. Low complexity-rich tracts occupy residues 305-349, 357-378, and 471-481; these read DTSG…NSTS, NSQSNSNSHSNSSNSHTTTASA, and NNNNNNHNLNH. The span at 482 to 514 shows a compositional bias: basic residues; it reads LNHHHHHHHHQHHHQHHPHGHHGHQGHQGHQGH. Positions 547 to 562 are enriched in low complexity; that stretch reads AVSAATGGATSASSTA.

It belongs to the MOB1/phocein family. In terms of assembly, interacts with and activates trc, also interacts with wts.

It localises to the cytoplasm. It is found in the nucleus. Required for the normal morphogenesis of a variety of polarized outgrowths including epidermal hairs, bristles, arista laterals, and dendrites. This chain is MOB kinase activator-like 2, found in Drosophila pseudoobscura pseudoobscura (Fruit fly).